The chain runs to 306 residues: 4-hydroxybenzoate geranyltransferase 2 (306 aa).

8 helical membrane passes run 38 to 58 (IGSW…ADLG), 61 to 81 (PKML…GCTI), 119 to 139 (LFIG…LAIV), 153 to 173 (ITYW…LLGS), 178 to 198 (GSVV…WTLV), 229 to 249 (IWIT…GFIV), 251 to 271 (IGLP…WQIF), and 285 to 305 (FVSN…GRLF).

The protein belongs to the UbiA prenyltransferase family. Requires Mg(2+) as cofactor. Expressed only in roots.

The protein localises to the endoplasmic reticulum membrane. The catalysed reaction is 4-hydroxybenzoate + (2E)-geranyl diphosphate = 3-geranyl-4-hydroxybenzoate + diphosphate. Its function is as follows. Prenyltransferase involved in the biosynthesis of shikonin, a naphthoquinone secondary metabolite. Could accept only geranyl diphosphate and not dimethylallyl diphosphate, farnesyl diphosphate, or geranylgeranyl diphosphate as substrate. The chain is 4-hydroxybenzoate geranyltransferase 2 (PGT-2) from Lithospermum erythrorhizon (Purple gromwell).